Reading from the N-terminus, the 296-residue chain is Ribosomal RNA small subunit methyltransferase A (296 aa).

Asparagine 40, valine 42, glycine 67, glutamate 88, aspartate 118, and asparagine 137 together coordinate S-adenosyl-L-methionine.

It belongs to the class I-like SAM-binding methyltransferase superfamily. rRNA adenine N(6)-methyltransferase family. RsmA subfamily.

The protein resides in the cytoplasm. It carries out the reaction adenosine(1518)/adenosine(1519) in 16S rRNA + 4 S-adenosyl-L-methionine = N(6)-dimethyladenosine(1518)/N(6)-dimethyladenosine(1519) in 16S rRNA + 4 S-adenosyl-L-homocysteine + 4 H(+). Specifically dimethylates two adjacent adenosines (A1518 and A1519) in the loop of a conserved hairpin near the 3'-end of 16S rRNA in the 30S particle. May play a critical role in biogenesis of 30S subunits. The protein is Ribosomal RNA small subunit methyltransferase A of Rhodococcus opacus (strain B4).